Here is a 448-residue protein sequence, read N- to C-terminus: Phosphoglucosamine mutase (448 aa).

The active-site Phosphoserine intermediate is the Ser-100. Residues Ser-100, Asp-240, Asp-242, and Asp-244 each contribute to the Mg(2+) site. Phosphoserine is present on Ser-100.

It belongs to the phosphohexose mutase family. It depends on Mg(2+) as a cofactor. Activated by phosphorylation.

The catalysed reaction is alpha-D-glucosamine 1-phosphate = D-glucosamine 6-phosphate. In terms of biological role, catalyzes the conversion of glucosamine-6-phosphate to glucosamine-1-phosphate. The sequence is that of Phosphoglucosamine mutase from Bacillus mycoides (strain KBAB4) (Bacillus weihenstephanensis).